We begin with the raw amino-acid sequence, 471 residues long: Tumor necrosis factor receptor superfamily member 1A (471 aa).

Residues 1-29 (MGLPTVPGLLLPLVLPALLADVYPAGVQG) form the signal peptide. Topologically, residues 30 to 210 (LVPHPGDLEK…GKDSQDPGTT (181 aa)) are extracellular. TNFR-Cys repeat units lie at residues 43-82 (PCPQ…TDCR), 83-125 (VCAP…DTVC), 126-166 (GCRK…DTIC), and 167-195 (HCHM…KLCP). 7 disulfide bridges follow: Cys-44-Cys-58, Cys-59-Cys-72, Cys-62-Cys-81, Cys-84-Cys-99, Cys-102-Cys-117, Cys-105-Cys-125, and Cys-127-Cys-143. N-linked (GlcNAc...) asparagine glycosylation is present at Asn-54. 2 N-linked (GlcNAc...) asparagine glycosylation sites follow: Asn-145 and Asn-151. 5 disulfides stabilise this stretch: Cys-146–Cys-158, Cys-149–Cys-166, Cys-168–Cys-179, Cys-182–Cys-194, and Cys-185–Cys-190. Residues 211–233 (VLLPLVIVFGLCLASFASVVLAC) form a helical membrane-spanning segment. Over 234–471 (RYQRWKPKLY…RLASEPRLLW (238 aa)) the chain is Cytoplasmic. The segment at 340 to 360 (TPGPPASTHLCTPVQKWEASA) is N-SMase activation domain (NSD). The region spanning 372–457 (PATLYAVVDG…GCLENIEEAL (86 aa)) is the Death domain.

Binding of TNF to the extracellular domain leads to homotrimerization. The aggregated death domains provide a novel molecular interface that interacts specifically with the death domain of TRADD. Various TRADD-interacting proteins such as TRAFS, RIPK1 and possibly FADD, are recruited to the complex by their association with TRADD. This complex activates at least two distinct signaling cascades, apoptosis and NF-kappa-B signaling. Interacts with BAG4, BABAM2, FEM1B, GRB2, SQSTM1 and TRPC4AP. Interacts directly with NOL3 (via CARD domain); inhibits TNF-signaling pathway. Interacts with SH3RF2, TRADD and RIPK1. SH3RF2 facilitates the recruitment of RIPK1 and TRADD to TNFRSF1A in a TNF-alpha-dependent process. Interacts with PGLYRP1; this interaction is important for cell death induction. Interacts (via death domain) with MADD (via death domain).

Its subcellular location is the cell membrane. The protein localises to the golgi apparatus membrane. Its function is as follows. Receptor for TNFSF2/TNF-alpha and homotrimeric TNFSF1/lymphotoxin-alpha. The adapter molecule FADD recruits caspase-8 to the activated receptor. The resulting death-inducing signaling complex (DISC) performs caspase-8 proteolytic activation which initiates the subsequent cascade of caspases (aspartate-specific cysteine proteases) mediating apoptosis. The protein is Tumor necrosis factor receptor superfamily member 1A (TNFRSF1A) of Bos taurus (Bovine).